Reading from the N-terminus, the 124-residue chain is Aspartate 1-decarboxylase (124 aa).

Serine 21 (schiff-base intermediate with substrate; via pyruvic acid) is an active-site residue. Residue serine 21 is modified to Pyruvic acid (Ser). Threonine 53 is a binding site for substrate. The active-site Proton donor is tyrosine 54. Residue 69–71 (GAA) participates in substrate binding.

The protein belongs to the PanD family. Heterooctamer of four alpha and four beta subunits. Pyruvate is required as a cofactor. Post-translationally, is synthesized initially as an inactive proenzyme, which is activated by self-cleavage at a specific serine bond to produce a beta-subunit with a hydroxyl group at its C-terminus and an alpha-subunit with a pyruvoyl group at its N-terminus.

It is found in the cytoplasm. The catalysed reaction is L-aspartate + H(+) = beta-alanine + CO2. Its pathway is cofactor biosynthesis; (R)-pantothenate biosynthesis; beta-alanine from L-aspartate: step 1/1. In terms of biological role, catalyzes the pyruvoyl-dependent decarboxylation of aspartate to produce beta-alanine. This chain is Aspartate 1-decarboxylase, found in Dehalococcoides mccartyi (strain ATCC BAA-2266 / KCTC 15142 / 195) (Dehalococcoides ethenogenes (strain 195)).